The sequence spans 750 residues: Photosystem I P700 chlorophyll a apoprotein A1 (750 aa).

The next 8 membrane-spanning stretches (helical) occupy residues 70 to 93 (VFSA…FHGA), 156 to 179 (LYCT…FHYH), 195 to 219 (LNHH…HVSL), 291 to 309 (IAHH…GHMY), 346 to 369 (WHAQ…HHMY), 385 to 411 (LSLF…IFMV), 433 to 455 (AIIS…LYIH), and 531 to 549 (FLVH…LILL). [4Fe-4S] cluster-binding residues include Cys573 and Cys582. The next 2 membrane-spanning stretches (helical) occupy residues 589–610 (HVFL…HFSW) and 664–686 (LSAY…MFLF). His675 is a chlorophyll a' binding site. Chlorophyll a-binding residues include Met683 and Tyr691. Phylloquinone is bound at residue Trp692. The chain crosses the membrane as a helical span at residues 724-744 (AVGVTHYLLGGIATTWAFFLA).

It belongs to the PsaA/PsaB family. As to quaternary structure, the PsaA/B heterodimer binds the P700 chlorophyll special pair and subsequent electron acceptors. PSI consists of a core antenna complex that captures photons, and an electron transfer chain that converts photonic excitation into a charge separation. The eukaryotic PSI reaction center is composed of at least 11 subunits. Requires P700 is a chlorophyll a/chlorophyll a' dimer, A0 is one or more chlorophyll a, A1 is one or both phylloquinones and FX is a shared 4Fe-4S iron-sulfur center. as cofactor.

The protein localises to the plastid. The protein resides in the chloroplast thylakoid membrane. It carries out the reaction reduced [plastocyanin] + hnu + oxidized [2Fe-2S]-[ferredoxin] = oxidized [plastocyanin] + reduced [2Fe-2S]-[ferredoxin]. PsaA and PsaB bind P700, the primary electron donor of photosystem I (PSI), as well as the electron acceptors A0, A1 and FX. PSI is a plastocyanin-ferredoxin oxidoreductase, converting photonic excitation into a charge separation, which transfers an electron from the donor P700 chlorophyll pair to the spectroscopically characterized acceptors A0, A1, FX, FA and FB in turn. Oxidized P700 is reduced on the lumenal side of the thylakoid membrane by plastocyanin. This chain is Photosystem I P700 chlorophyll a apoprotein A1, found in Oryza nivara (Indian wild rice).